The chain runs to 138 residues: Large ribosomal subunit protein uL16 (138 aa).

Residues 1–13 are compositionally biased toward basic residues; sequence MLQPKRRKYRKEQ. A disordered region spans residues 1–20; it reads MLQPKRRKYRKEQKGRNTGI.

The protein belongs to the universal ribosomal protein uL16 family. In terms of assembly, part of the 50S ribosomal subunit.

In terms of biological role, binds 23S rRNA and is also seen to make contacts with the A and possibly P site tRNAs. The polypeptide is Large ribosomal subunit protein uL16 (Burkholderia mallei (strain NCTC 10247)).